We begin with the raw amino-acid sequence, 155 residues long: UPF0178 protein Gmet_1725 (155 aa).

Belongs to the UPF0178 family.

This chain is UPF0178 protein Gmet_1725, found in Geobacter metallireducens (strain ATCC 53774 / DSM 7210 / GS-15).